Here is a 612-residue protein sequence, read N- to C-terminus: Sulfite reductase [NADPH] hemoprotein beta-component (612 aa).

The segment at 1–26 (MDDHKPIETPDGPAVDTPGIGARRYE) is disordered. Residues Cys469, Cys475, Cys514, and Cys518 each contribute to the [4Fe-4S] cluster site. Siroheme is bound at residue Cys518.

The protein belongs to the nitrite and sulfite reductase 4Fe-4S domain family. As to quaternary structure, alpha(8)-beta(8). The alpha component is a flavoprotein, the beta component is a hemoprotein. Siroheme serves as cofactor. Requires [4Fe-4S] cluster as cofactor.

It carries out the reaction hydrogen sulfide + 3 NADP(+) + 3 H2O = sulfite + 3 NADPH + 4 H(+). It functions in the pathway sulfur metabolism; hydrogen sulfide biosynthesis; hydrogen sulfide from sulfite (NADPH route): step 1/1. Component of the sulfite reductase complex that catalyzes the 6-electron reduction of sulfite to sulfide. This is one of several activities required for the biosynthesis of L-cysteine from sulfate. The chain is Sulfite reductase [NADPH] hemoprotein beta-component from Methylorubrum extorquens (strain CM4 / NCIMB 13688) (Methylobacterium extorquens).